Here is a 145-residue protein sequence, read N- to C-terminus: uncharacterized protein (145 aa).

A helical membrane pass occupies residues 63 to 83; sequence FLCLPLFLSFLVANLILWLSF.

Its subcellular location is the mitochondrion membrane. This is an uncharacterized protein from Arabidopsis thaliana (Mouse-ear cress).